Here is a 472-residue protein sequence, read N- to C-terminus: Glutamine synthetase (472 aa).

Residues 17-101 (YDIKFVLLRF…LRCSIYEPST (85 aa)) enclose the GS beta-grasp domain. One can recognise a GS catalytic domain in the interval 109–472 (PRSIAIRAEN…HPVEFEMYYA (364 aa)). Mg(2+) contacts are provided by glutamate 134 and glutamate 136. Glutamate 212 provides a ligand contact to ATP. Residues glutamate 217 and glutamate 225 each contribute to the Mg(2+) site. L-glutamate is bound by residues 269–270 (NG) and glycine 270. Histidine 274 contacts Mg(2+). ATP is bound by residues 276–278 (NMS) and serine 278. 3 residues coordinate L-glutamate: arginine 326, glutamate 332, and arginine 344. ATP-binding residues include arginine 344, arginine 349, and lysine 357. Residue glutamate 362 coordinates Mg(2+). Residue arginine 364 coordinates L-glutamate. Residue tyrosine 402 is modified to O-AMP-tyrosine.

The protein belongs to the glutamine synthetase family. In terms of assembly, oligomer of 12 subunits arranged in the form of two hexameric ring. Mg(2+) is required as a cofactor.

It is found in the cytoplasm. It catalyses the reaction L-glutamate + NH4(+) + ATP = L-glutamine + ADP + phosphate + H(+). The activity of this enzyme could be controlled by adenylation under conditions of abundant glutamine. In terms of biological role, catalyzes the ATP-dependent biosynthesis of glutamine from glutamate and ammonia. This chain is Glutamine synthetase, found in Pasteurella multocida (strain Pm70).